The primary structure comprises 122 residues: Large ribosomal subunit protein uL14 (122 aa).

Belongs to the universal ribosomal protein uL14 family. In terms of assembly, part of the 50S ribosomal subunit. Forms a cluster with proteins L3 and L19. In the 70S ribosome, L14 and L19 interact and together make contacts with the 16S rRNA in bridges B5 and B8.

Functionally, binds to 23S rRNA. Forms part of two intersubunit bridges in the 70S ribosome. In Rippkaea orientalis (strain PCC 8801 / RF-1) (Cyanothece sp. (strain PCC 8801)), this protein is Large ribosomal subunit protein uL14.